Reading from the N-terminus, the 206-residue chain is FMN-dependent NADH:quinone oxidoreductase (206 aa).

FMN is bound by residues Ser-9, 15–17 (SVS), and 139–142 (SRGG).

This sequence belongs to the azoreductase type 1 family. As to quaternary structure, homodimer. FMN serves as cofactor.

It catalyses the reaction 2 a quinone + NADH + H(+) = 2 a 1,4-benzosemiquinone + NAD(+). It carries out the reaction N,N-dimethyl-1,4-phenylenediamine + anthranilate + 2 NAD(+) = 2-(4-dimethylaminophenyl)diazenylbenzoate + 2 NADH + 2 H(+). Functionally, quinone reductase that provides resistance to thiol-specific stress caused by electrophilic quinones. In terms of biological role, also exhibits azoreductase activity. Catalyzes the reductive cleavage of the azo bond in aromatic azo compounds to the corresponding amines. In Cupriavidus necator (strain ATCC 17699 / DSM 428 / KCTC 22496 / NCIMB 10442 / H16 / Stanier 337) (Ralstonia eutropha), this protein is FMN-dependent NADH:quinone oxidoreductase.